The sequence spans 51 residues: Insulin (51 aa).

Disulfide bonds link Cys7–Cys37, Cys19–Cys50, and Cys36–Cys41.

The protein belongs to the insulin family. In terms of assembly, heterodimer of a B chain and an A chain linked by two disulfide bonds.

It is found in the secreted. Functionally, insulin decreases blood glucose concentration. It increases cell permeability to monosaccharides, amino acids and fatty acids. It accelerates glycolysis, the pentose phosphate cycle, and glycogen synthesis in liver. The chain is Insulin (INS) from Camelus dromedarius (Dromedary).